We begin with the raw amino-acid sequence, 316 residues long: N-acetyl-gamma-glutamyl-phosphate reductase (316 aa).

Residue Cys136 is part of the active site.

Belongs to the NAGSA dehydrogenase family. Type 1 subfamily.

The protein localises to the cytoplasm. It catalyses the reaction N-acetyl-L-glutamate 5-semialdehyde + phosphate + NADP(+) = N-acetyl-L-glutamyl 5-phosphate + NADPH + H(+). The protein operates within amino-acid biosynthesis; L-arginine biosynthesis; N(2)-acetyl-L-ornithine from L-glutamate: step 3/4. Functionally, catalyzes the NADPH-dependent reduction of N-acetyl-5-glutamyl phosphate to yield N-acetyl-L-glutamate 5-semialdehyde. The sequence is that of N-acetyl-gamma-glutamyl-phosphate reductase from Xanthomonas campestris pv. campestris (strain B100).